The chain runs to 182 residues: Ribosome maturation factor RimM (182 aa).

The 80-residue stretch at 103–182 folds into the PRC barrel domain; the sequence is GDDYYWKDLM…VIEADWDPGF (80 aa).

It belongs to the RimM family. As to quaternary structure, binds ribosomal protein uS19.

The protein localises to the cytoplasm. Functionally, an accessory protein needed during the final step in the assembly of 30S ribosomal subunit, possibly for assembly of the head region. Essential for efficient processing of 16S rRNA. May be needed both before and after RbfA during the maturation of 16S rRNA. It has affinity for free ribosomal 30S subunits but not for 70S ribosomes. In Serratia proteamaculans (strain 568), this protein is Ribosome maturation factor RimM.